The chain runs to 225 residues: Translation initiation factor 6 (225 aa).

The protein belongs to the eIF-6 family.

Binds to the 50S ribosomal subunit and prevents its association with the 30S ribosomal subunit to form the 70S initiation complex. The protein is Translation initiation factor 6 of Hyperthermus butylicus (strain DSM 5456 / JCM 9403 / PLM1-5).